A 402-amino-acid polypeptide reads, in one-letter code: Caspase-1 (402 aa).

Residues 1-91 (MADKVLRAKR…YLAEILELQS (91 aa)) enclose the CARD domain. Positions 1 to 118 (MADKVLRAKR…PFSSETKEKL (118 aa)) are excised as a propeptide. Residues His236 and Cys284 contribute to the active site. The propeptide occupies 297 to 314 (SVGNSEEGFLTDAIFEDD). Residue Ser301 is modified to Phosphoserine.

The protein belongs to the peptidase C14A family. As to quaternary structure, heterotetramer that consists of two anti-parallel arranged heterodimers, each one formed by a 20 kDa (Caspase-1 subunit p20) and a 10 kDa (Caspase-1 subunit p10) subunit. May be a component of the inflammasome, a protein complex which also includes PYCARD, CARD8 and NLRP2 and whose function would be the activation of pro-inflammatory caspases. Component of the AIM2 PANoptosome complex, a multiprotein complex that drives inflammatory cell death (PANoptosis). Both the p10 and p20 subunits interact with MEFV. Interacts with CARD17P/INCA and CARD18. Interacts with SERPINB1; this interaction regulates CASP1 activity. Heterotetramer that consists of two anti-parallel arranged heterodimers, each one formed by a 20 kDa (Caspase-1 subunit p20) and a 10 kDa (Caspase-1 subunit p10) subunit. In terms of processing, the two subunits are derived from the precursor sequence by an autocatalytic mechanism. Post-translationally, ubiquitinated via 'Lys-11'-linked polyubiquitination. Deubiquitinated by USP8.

It localises to the cytoplasm. The protein resides in the cell membrane. It carries out the reaction Strict requirement for an Asp residue at position P1 and has a preferred cleavage sequence of Tyr-Val-Ala-Asp-|-.. Thiol protease involved in a variety of inflammatory processes by proteolytically cleaving other proteins, such as the precursors of the inflammatory cytokines interleukin-1 beta (IL1B) and interleukin 18 (IL18) as well as the pyroptosis inducer Gasdermin-D (GSDMD), into active mature peptides. Plays a key role in cell immunity as an inflammatory response initiator: once activated through formation of an inflammasome complex, it initiates a pro-inflammatory response through the cleavage of the two inflammatory cytokines IL1B and IL18, releasing the mature cytokines which are involved in a variety of inflammatory processes. Cleaves a tetrapeptide after an Asp residue at position P1. Also initiates pyroptosis, a programmed lytic cell death pathway, through cleavage of GSDMD. In contrast to cleavage of interleukin IL1B, recognition and cleavage of GSDMD is not strictly dependent on the consensus cleavage site but depends on an exosite interface on CASP1 that recognizes and binds the Gasdermin-D, C-terminal (GSDMD-CT) part. Cleaves and activates CASP7 in response to bacterial infection, promoting plasma membrane repair. Upon inflammasome activation, during DNA virus infection but not RNA virus challenge, controls antiviral immunity through the cleavage of CGAS, rendering it inactive. In apoptotic cells, cleaves SPHK2 which is released from cells and remains enzymatically active extracellularly. In Rattus norvegicus (Rat), this protein is Caspase-1 (Casp1).